The following is a 552-amino-acid chain: Arginine--tRNA ligase (552 aa).

The 'HIGH' region motif lies at 129-139; it reads ANPTGPVTLAS.

The protein belongs to the class-I aminoacyl-tRNA synthetase family. Monomer.

Its subcellular location is the cytoplasm. It catalyses the reaction tRNA(Arg) + L-arginine + ATP = L-arginyl-tRNA(Arg) + AMP + diphosphate. This Frankia alni (strain DSM 45986 / CECT 9034 / ACN14a) protein is Arginine--tRNA ligase.